A 94-amino-acid polypeptide reads, in one-letter code: Integration host factor subunit beta (94 aa).

Belongs to the bacterial histone-like protein family. In terms of assembly, heterodimer of an alpha and a beta chain.

This protein is one of the two subunits of integration host factor, a specific DNA-binding protein that functions in genetic recombination as well as in transcriptional and translational control. This is Integration host factor subunit beta from Ruegeria pomeroyi (strain ATCC 700808 / DSM 15171 / DSS-3) (Silicibacter pomeroyi).